Here is a 32-residue protein sequence, read N- to C-terminus: Protein YthB (32 aa).

The chain is Protein YthB from Escherichia coli (strain K12).